The sequence spans 131 residues: Fatty acid-binding protein (131 aa).

(5Z,8Z,11Z,14Z)-eicosatetraenoate contacts are provided by residues Arg-106 and 126–128 (RPY). (9Z)-octadecenoate contacts are provided by residues Arg-106 and 126-128 (RPY).

Belongs to the calycin superfamily. Fatty-acid binding protein (FABP) family.

Its subcellular location is the cytoplasm. Functionally, FABPs are thought to play a role in the intracellular transport of long-chain fatty acids and their acyl-CoA esters. The polypeptide is Fatty acid-binding protein (Lepidoglyphus destructor (Storage mite)).